The sequence spans 363 residues: Probable aminomethyltransferase (363 aa).

Belongs to the GcvT family. As to quaternary structure, the glycine cleavage system is composed of four proteins: P, T, L and H.

It carries out the reaction N(6)-[(R)-S(8)-aminomethyldihydrolipoyl]-L-lysyl-[protein] + (6S)-5,6,7,8-tetrahydrofolate = N(6)-[(R)-dihydrolipoyl]-L-lysyl-[protein] + (6R)-5,10-methylene-5,6,7,8-tetrahydrofolate + NH4(+). Its function is as follows. The glycine cleavage system catalyzes the degradation of glycine. This Haloarcula marismortui (strain ATCC 43049 / DSM 3752 / JCM 8966 / VKM B-1809) (Halobacterium marismortui) protein is Probable aminomethyltransferase.